Here is a 402-residue protein sequence, read N- to C-terminus: Dual-specificity RNA methyltransferase RlmN (402 aa).

Glu94 acts as the Proton acceptor in catalysis. One can recognise a Radical SAM core domain in the interval 100-351 (EDDRGTLCIS…ATVRKTRGDD (252 aa)). Cys107 and Cys356 are joined by a disulfide. Residues Cys114, Cys118, and Cys121 each contribute to the [4Fe-4S] cluster site. S-adenosyl-L-methionine is bound by residues 182-183 (GE), Ser214, 236-238 (SLH), and Asn313. Cys356 acts as the S-methylcysteine intermediate in catalysis.

It belongs to the radical SAM superfamily. RlmN family. It depends on [4Fe-4S] cluster as a cofactor.

It localises to the cytoplasm. It catalyses the reaction adenosine(2503) in 23S rRNA + 2 reduced [2Fe-2S]-[ferredoxin] + 2 S-adenosyl-L-methionine = 2-methyladenosine(2503) in 23S rRNA + 5'-deoxyadenosine + L-methionine + 2 oxidized [2Fe-2S]-[ferredoxin] + S-adenosyl-L-homocysteine. The catalysed reaction is adenosine(37) in tRNA + 2 reduced [2Fe-2S]-[ferredoxin] + 2 S-adenosyl-L-methionine = 2-methyladenosine(37) in tRNA + 5'-deoxyadenosine + L-methionine + 2 oxidized [2Fe-2S]-[ferredoxin] + S-adenosyl-L-homocysteine. Its function is as follows. Specifically methylates position 2 of adenine 2503 in 23S rRNA and position 2 of adenine 37 in tRNAs. m2A2503 modification seems to play a crucial role in the proofreading step occurring at the peptidyl transferase center and thus would serve to optimize ribosomal fidelity. This Polynucleobacter asymbioticus (strain DSM 18221 / CIP 109841 / QLW-P1DMWA-1) (Polynucleobacter necessarius subsp. asymbioticus) protein is Dual-specificity RNA methyltransferase RlmN.